The chain runs to 311 residues: R2-like ligand binding oxidase (311 aa).

Mn(2+)-binding residues include glutamate 68, glutamate 101, and histidine 104. The segment at residues 71 to 162 (VTQDIQPFMA…AAQVRASVTY (92 aa)) is a cross-link (3-(O4'-tyrosyl)-valine (Val-Tyr)). Glutamate 101 serves as a coordination point for Fe cation. Glutamate 167, glutamate 202, and histidine 205 together coordinate Fe cation.

This sequence belongs to the ribonucleoside diphosphate reductase small chain family. R2-like ligand binding oxidase subfamily. As to quaternary structure, homodimer. The cofactor is Fe cation. Mn(2+) is required as a cofactor.

Its function is as follows. Probable oxidase that might be involved in lipid metabolism. This is R2-like ligand binding oxidase from Mycobacterium avium (strain 104).